The following is a 77-amino-acid chain: Serine protease inhibitor 2 (77 aa).

Positions 1–17 are cleaved as a signal peptide; that stretch reads MMFTPLIVLTLLVLATA. Disulfide bonds link Cys-21/Cys-53, Cys-30/Cys-48, Cys-33/Cys-44, Cys-37/Cys-74, and Cys-55/Cys-68. The 54-residue stretch at 21-74 folds into the TIL domain; it reads CGPNEQWSDCPKCELQCGESDKPCATICGEPKCYCSPDKYRRIPDGRCIRKIQC.

It localises to the secreted. Defends the organism against the host's proteinases. This chain is Serine protease inhibitor 2, found in Anisakis simplex (Herring worm).